Consider the following 123-residue polypeptide: Ribonuclease P protein component (123 aa).

Belongs to the RnpA family. In terms of assembly, consists of a catalytic RNA component (M1 or rnpB) and a protein subunit.

The enzyme catalyses Endonucleolytic cleavage of RNA, removing 5'-extranucleotides from tRNA precursor.. In terms of biological role, RNaseP catalyzes the removal of the 5'-leader sequence from pre-tRNA to produce the mature 5'-terminus. It can also cleave other RNA substrates such as 4.5S RNA. The protein component plays an auxiliary but essential role in vivo by binding to the 5'-leader sequence and broadening the substrate specificity of the ribozyme. In Herpetosiphon aurantiacus (strain ATCC 23779 / DSM 785 / 114-95), this protein is Ribonuclease P protein component.